The primary structure comprises 142 residues: Large ribosomal subunit protein bL17 (142 aa).

It belongs to the bacterial ribosomal protein bL17 family. As to quaternary structure, part of the 50S ribosomal subunit. Contacts protein L32.

This is Large ribosomal subunit protein bL17 from Protochlamydia amoebophila (strain UWE25).